The primary structure comprises 359 residues: Putative cyclin-F1-2 (359 aa).

Belongs to the cyclin family. Cyclin F subfamily.

The chain is Putative cyclin-F1-2 (CYCF1-2) from Oryza sativa subsp. japonica (Rice).